The following is a 368-amino-acid chain: Flagellar P-ring protein (368 aa).

The signal sequence occupies residues 1-24; that stretch reads MNSIFRKIVFAAFLLLALPQFALA.

This sequence belongs to the FlgI family. In terms of assembly, the basal body constitutes a major portion of the flagellar organelle and consists of four rings (L,P,S, and M) mounted on a central rod.

It is found in the periplasm. It localises to the bacterial flagellum basal body. In terms of biological role, assembles around the rod to form the L-ring and probably protects the motor/basal body from shearing forces during rotation. The sequence is that of Flagellar P-ring protein from Geotalea uraniireducens (strain Rf4) (Geobacter uraniireducens).